A 442-amino-acid chain; its full sequence is MHVLTPSLYIYAFFIVCVRLKCGRSKRVANAKHATYDMPPKGLRVRDMLEKTAQQNCNQRKRGKCRKFFFLWKMDKMGDTHLGGQANGRKNLLRSESATDEASLGGNPLKEKLKESPANWGKDKQEEQQSTDRLPLPKVGNKMPEKKPDWFHVPAPTGKKYNELKADLKKLKLHTVCEEAQCPNIGECWNIGTATIMLLGDTCTRGCKFCSIKTSSKPLPPDANEPFNTAKAICEWDINYVVLTSVDRDDLPDGGASHFAKTIELIKFSRPEILIECLVSDFQGNVDSIRKLANSGMEVYAHNIETVRRLQKFVRDRRANYEQSLWVLKTAKEINPLLYTKTSIMLGLGETKQEVLQAMADVRQNNIDVITFGQYLRPTKNHLNVVEYVSPQMFDYYKEEGMKMGFKYIASGPLVRSSYKAGEYFMKNLVEQRRGVKLHAEG.

An N-terminal signal peptide occupies residues 1–25 (MHVLTPSLYIYAFFIVCVRLKCGRS). A disordered region spans residues 92 to 154 (LLRSESATDE…EKKPDWFHVP (63 aa)). Residues 109–127 (LKEKLKESPANWGKDKQEE) are compositionally biased toward basic and acidic residues. Positions 177, 182, 188, 203, 207, 210, and 418 each coordinate [4Fe-4S] cluster. One can recognise a Radical SAM core domain in the interval 189 to 407 (WNIGTATIML…KEEGMKMGFK (219 aa)).

It belongs to the radical SAM superfamily. Lipoyl synthase family. Requires [4Fe-4S] cluster as cofactor.

It localises to the plastid. It is found in the apicoplast. The enzyme catalyses [[Fe-S] cluster scaffold protein carrying a second [4Fe-4S](2+) cluster] + N(6)-octanoyl-L-lysyl-[protein] + 2 oxidized [2Fe-2S]-[ferredoxin] + 2 S-adenosyl-L-methionine + 4 H(+) = [[Fe-S] cluster scaffold protein] + N(6)-[(R)-dihydrolipoyl]-L-lysyl-[protein] + 4 Fe(3+) + 2 hydrogen sulfide + 2 5'-deoxyadenosine + 2 L-methionine + 2 reduced [2Fe-2S]-[ferredoxin]. The protein operates within protein modification; protein lipoylation via endogenous pathway; protein N(6)-(lipoyl)lysine from octanoyl-[acyl-carrier-protein]: step 2/2. Its function is as follows. Catalyzes the radical-mediated insertion of two sulfur atoms into the C-6 and C-8 positions of the octanoyl moiety bound to the lipoyl domains of lipoate-dependent enzymes, thereby converting the octanoylated domains into lipoylated derivatives. The protein is Lipoyl synthase, apicoplast of Plasmodium vivax (strain Salvador I).